The sequence spans 101 residues: 2-amino-4-ketopentanoate thiolase alpha subunit (101 aa).

The protein belongs to the OrtA family. Heterodimer with OrtB.

It carries out the reaction D-alanine + acetyl-CoA = (2R)-2-amino-4-oxopentanoate + CoA. Functionally, involved in the ornithine fermentation pathway. Catalyzes the thiolytic cleavage of 2-amino-4-ketopentanoate (AKP) with coenzyme A (CoA) to form acetyl-CoA and alanine. It is strictly specific for AKP. This chain is 2-amino-4-ketopentanoate thiolase alpha subunit, found in Unknown prokaryotic organism.